The following is a 201-amino-acid chain: Molybdenum cofactor guanylyltransferase (201 aa).

GTP-binding positions include 14–16 (LAG), Lys-31, and Asp-104. Residue Asp-104 coordinates Mg(2+).

This sequence belongs to the MobA family. Monomer. Requires Mg(2+) as cofactor.

Its subcellular location is the cytoplasm. It catalyses the reaction Mo-molybdopterin + GTP + H(+) = Mo-molybdopterin guanine dinucleotide + diphosphate. In terms of biological role, transfers a GMP moiety from GTP to Mo-molybdopterin (Mo-MPT) cofactor (Moco or molybdenum cofactor) to form Mo-molybdopterin guanine dinucleotide (Mo-MGD) cofactor. The sequence is that of Molybdenum cofactor guanylyltransferase from Helicobacter pylori (strain ATCC 700392 / 26695) (Campylobacter pylori).